A 436-amino-acid chain; its full sequence is MVLPTVAIVGRPNVGKSTLFNRIAGERISIVEDVEGVTRDRIYATGEWLNRQFSLIDTGGIDDVDAPFMEQIKHQAQIAMEEADVIVFVVSGKEGVTDADEYVSKILYRTNTPVILAVNKVDNPEMRNDIYDFYSLGLGDPYPVSSVHGIGTGDVLDAIVENLPVEEAEENDDIIRFSLIGRPNVGKSSLINAILGEDRVIASPVAGTTRDAIDTHFTDADGQEFTMIDTAGMRKSGKIYENTEKYSVMRAMRAIDRSDVVLMVINAEEGIREYDKRIAGFAHEAGKGMIIVVNKWDAIDKDNHTVAKWEADIRDQFQFLTYAPIIFVSALTKQRLNKLPDLIKRISESQNKRIPSAVLNDVIMDAIAINPTPTDKGKRLKIFYATQVSVKPPTFVVFVNEEELMHFSYLRFLENQIRAAFTFEGTPIHLIARKRK.

2 EngA-type G domains span residues 4–167 and 175–351; these read PTVA…PVEE and IRFS…ESQN. Residues 10-17, 57-61, 119-122, 181-188, 229-233, and 294-297 contribute to the GTP site; these read GRPNVGKS, DTGGI, NKVD, DTAGM, and NKWD. The KH-like domain occupies 352–436; sequence KRIPSAVLND…PIHLIARKRK (85 aa).

The protein belongs to the TRAFAC class TrmE-Era-EngA-EngB-Septin-like GTPase superfamily. EngA (Der) GTPase family. As to quaternary structure, associates with the 50S ribosomal subunit.

Functionally, GTPase that plays an essential role in the late steps of ribosome biogenesis. This is GTPase Der from Streptococcus pyogenes serotype M3 (strain ATCC BAA-595 / MGAS315).